We begin with the raw amino-acid sequence, 160 residues long: 2-C-methyl-D-erythritol 2,4-cyclodiphosphate synthase (160 aa).

The a divalent metal cation site is built by D9 and H11. Residues 9–11 (DVH) and 35–36 (HS) each bind 4-CDP-2-C-methyl-D-erythritol 2-phosphate. Residue H43 participates in a divalent metal cation binding. 4-CDP-2-C-methyl-D-erythritol 2-phosphate is bound by residues 57–59 (DIG), 62–66 (FPDTD), 101–107 (AEAPKMA), 133–136 (TTSE), F140, and R143.

It belongs to the IspF family. In terms of assembly, homotrimer. A divalent metal cation is required as a cofactor.

The catalysed reaction is 4-CDP-2-C-methyl-D-erythritol 2-phosphate = 2-C-methyl-D-erythritol 2,4-cyclic diphosphate + CMP. It functions in the pathway isoprenoid biosynthesis; isopentenyl diphosphate biosynthesis via DXP pathway; isopentenyl diphosphate from 1-deoxy-D-xylulose 5-phosphate: step 4/6. Involved in the biosynthesis of isopentenyl diphosphate (IPP) and dimethylallyl diphosphate (DMAPP), two major building blocks of isoprenoid compounds. Catalyzes the conversion of 4-diphosphocytidyl-2-C-methyl-D-erythritol 2-phosphate (CDP-ME2P) to 2-C-methyl-D-erythritol 2,4-cyclodiphosphate (ME-CPP) with a corresponding release of cytidine 5-monophosphate (CMP). The polypeptide is 2-C-methyl-D-erythritol 2,4-cyclodiphosphate synthase (Methylobacillus flagellatus (strain ATCC 51484 / DSM 6875 / VKM B-1610 / KT)).